A 274-amino-acid chain; its full sequence is Large ribosomal subunit protein uL2 (274 aa).

The interval valine 223–lysine 274 is disordered.

This sequence belongs to the universal ribosomal protein uL2 family. In terms of assembly, part of the 50S ribosomal subunit. Forms a bridge to the 30S subunit in the 70S ribosome.

Its function is as follows. One of the primary rRNA binding proteins. Required for association of the 30S and 50S subunits to form the 70S ribosome, for tRNA binding and peptide bond formation. It has been suggested to have peptidyltransferase activity; this is somewhat controversial. Makes several contacts with the 16S rRNA in the 70S ribosome. The sequence is that of Large ribosomal subunit protein uL2 from Vibrio cholerae serotype O1 (strain M66-2).